A 386-amino-acid polypeptide reads, in one-letter code: MLSRKKTKNEVSKPAEVQGKYVKKETSPLLRNLMPSFIRHGPTIPRRTDLCLPDSSATAFSASGDGVVSRNQSFLRTAIQRTPHEVMRRESHRLSAPSYLVRSLADVPRECGSSQSFLTEVNFAVENGDSGSRYFFSDNFFDGQRRRPLGDRAQEDYRYYEYNHDLFQRMPQSQGRHTSGIGRVTATSLGNLTNHGSEDLPLPPGWSVDWTMRGRKYYIDHNTNTTHWSHPLEREGLPPGWERVESSEFGTYYVDHTNKRAQYRHPCAPSVPRYDQPPPITYQPQQTERNQSLLVPANPYHTAEIPDWLQVYARAPVKYDHILKWELFQLADLDTYQGMLKLLFMKELEQIVKLYEAYRQALLTELENRKQRQQWYAQQHGKTFLS.

2 positions are modified to phosphoserine: serine 95 and serine 137. 2 WW domains span residues 200–233 and 235–268; these read LPLPPGWSVDWTMRGRKYYIDHNTNTTHWSHPLE and EGLPPGWERVESSEFGTYYVDHTNKRAQYRHPCA. Residue threonine 211 is modified to Phosphothreonine. Positions 322-369 constitute an SARAH domain; that stretch reads ILKWELFQLADLDTYQGMLKLLFMKELEQIVKLYEAYRQALLTELENR. A coiled-coil region spans residues 345–374; the sequence is MKELEQIVKLYEAYRQALLTELENRKQRQQ.

As to quaternary structure, homodimer. Stabilized through interaction with STK3/MST2 or STK4/MST1. Interacts (via SARAH domain) with isoform 1 of NEK2. Interacts with ESR1 only in the presence of STK3/MST2. Interacts with WTIP and AJUBA. Post-translationally, phosphorylated by STK3/MST2 and STK4/MST1. Phosphorylation is not required for SAV1 stability and may increase the number of protein binding sites on the scaffold molecule. As to expression, ubiquitously expressed in adult tissues with the highest level found in testis.

It localises to the nucleus. It is found in the cytoplasm. Functionally, regulator of STK3/MST2 and STK4/MST1 in the Hippo signaling pathway which plays a pivotal role in organ size control and tumor suppression by restricting proliferation and promoting apoptosis. The core of this pathway is composed of a kinase cascade wherein STK3/MST2 and STK4/MST1, in complex with its regulatory protein SAV1, phosphorylates and activates LATS1/2 in complex with its regulatory protein MOB1, which in turn phosphorylates and inactivates YAP1 oncoprotein and WWTR1/TAZ. Phosphorylation of YAP1 by LATS1/2 inhibits its translocation into the nucleus to regulate cellular genes important for cell proliferation, cell death, and cell migration. SAV1 is required for STK3/MST2 and STK4/MST1 activation and promotes cell-cycle exit and terminal differentiation in developing epithelial tissues. Plays a role in centrosome disjunction by regulating the localization of NEK2 to centrosomes, and its ability to phosphorylate CROCC and CEP250. In conjunction with STK3/MST2, activates the transcriptional activity of ESR1 through the modulation of its phosphorylation. This Mus musculus (Mouse) protein is Protein salvador homolog 1 (Sav1).